Here is a 315-residue protein sequence, read N- to C-terminus: DNA-directed RNA polymerase subunit alpha (315 aa).

The tract at residues M1 to T228 is alpha N-terminal domain (alpha-NTD). Positions K245–D315 are alpha C-terminal domain (alpha-CTD).

It belongs to the RNA polymerase alpha chain family. In terms of assembly, homodimer. The RNAP catalytic core consists of 2 alpha, 1 beta, 1 beta' and 1 omega subunit. When a sigma factor is associated with the core the holoenzyme is formed, which can initiate transcription.

It carries out the reaction RNA(n) + a ribonucleoside 5'-triphosphate = RNA(n+1) + diphosphate. Functionally, DNA-dependent RNA polymerase catalyzes the transcription of DNA into RNA using the four ribonucleoside triphosphates as substrates. This chain is DNA-directed RNA polymerase subunit alpha, found in Clostridium botulinum (strain Langeland / NCTC 10281 / Type F).